The following is a 447-amino-acid chain: Argininosuccinate synthase (447 aa).

ATP-binding positions include 17–25 and Ala-43; that span reads AFSGGLDTS. L-citrulline is bound at residue Tyr-99. ATP-binding residues include Gly-129 and Thr-131. L-aspartate-binding residues include Thr-131, Asn-135, and Asp-136. L-citrulline is bound at residue Asn-135. Asp-136 serves as a coordination point for ATP. L-citrulline contacts are provided by Arg-139 and Ser-192. Asp-194 contributes to the ATP binding site. L-citrulline-binding residues include Thr-201, Glu-203, and Glu-280.

The protein belongs to the argininosuccinate synthase family. Type 2 subfamily. Homotetramer.

The protein resides in the cytoplasm. It carries out the reaction L-citrulline + L-aspartate + ATP = 2-(N(omega)-L-arginino)succinate + AMP + diphosphate + H(+). It functions in the pathway amino-acid biosynthesis; L-arginine biosynthesis; L-arginine from L-ornithine and carbamoyl phosphate: step 2/3. This Salmonella schwarzengrund (strain CVM19633) protein is Argininosuccinate synthase.